A 288-amino-acid polypeptide reads, in one-letter code: Proteasome assembly chaperone 1 (288 aa).

The segment at 1 to 33 (MATFFGEVQSVFSRAVDEEEEDEDDDEEEEEDR) is disordered. A compositionally biased stretch (acidic residues) spans 17–33 (DEEEEDEDDDEEEEEDR).

This sequence belongs to the PSMG1 family. As to quaternary structure, forms a heterodimer with psmg2. Degraded by the proteasome upon completion of 20S proteasome maturation.

It is found in the cytoplasm. The protein localises to the endoplasmic reticulum. Its function is as follows. Chaperone protein which promotes assembly of the 20S proteasome as part of a heterodimer with psmg2. The protein is Proteasome assembly chaperone 1 of Xenopus laevis (African clawed frog).